The following is a 90-amino-acid chain: Small ribosomal subunit protein bS6 (90 aa).

Residue Lys-33 forms an Isoglutamyl lysine isopeptide (Lys-Gln) (interchain with Q-Cter in protein Pup) linkage.

Belongs to the bacterial ribosomal protein bS6 family.

In terms of biological role, binds together with bS18 to 16S ribosomal RNA. This Mycolicibacterium smegmatis (strain ATCC 700084 / mc(2)155) (Mycobacterium smegmatis) protein is Small ribosomal subunit protein bS6 (rpsF).